The primary structure comprises 304 residues: Coenzyme PQQ synthesis protein B (304 aa).

It belongs to the PqqB family.

The protein operates within cofactor biosynthesis; pyrroloquinoline quinone biosynthesis. In terms of biological role, may be involved in the transport of PQQ or its precursor to the periplasm. The polypeptide is Coenzyme PQQ synthesis protein B (Stutzerimonas stutzeri (Pseudomonas stutzeri)).